The chain runs to 427 residues: Peptidase B (427 aa).

The Mn(2+) site is built by Lys195 and Asp200. Lys207 is a catalytic residue. Residues Asp218, Asp277, and Glu279 each coordinate Mn(2+). The active site involves Arg281.

It belongs to the peptidase M17 family. Homohexamer. It depends on Mn(2+) as a cofactor.

It localises to the cytoplasm. The enzyme catalyses Release of an N-terminal amino acid, Xaa, from a peptide or arylamide. Xaa is preferably Glu or Asp but may be other amino acids, including Leu, Met, His, Cys and Gln.. In terms of biological role, probably plays an important role in intracellular peptide degradation. The polypeptide is Peptidase B (Escherichia coli (strain K12 / MC4100 / BW2952)).